The following is a 229-amino-acid chain: Biosynthetic peptidoglycan transglycosylase (229 aa).

Residues 11-31 (NLLLALFLVLVAGPVVAVILY) traverse the membrane as a helical segment.

This sequence belongs to the glycosyltransferase 51 family.

Its subcellular location is the cell inner membrane. The catalysed reaction is [GlcNAc-(1-&gt;4)-Mur2Ac(oyl-L-Ala-gamma-D-Glu-L-Lys-D-Ala-D-Ala)](n)-di-trans,octa-cis-undecaprenyl diphosphate + beta-D-GlcNAc-(1-&gt;4)-Mur2Ac(oyl-L-Ala-gamma-D-Glu-L-Lys-D-Ala-D-Ala)-di-trans,octa-cis-undecaprenyl diphosphate = [GlcNAc-(1-&gt;4)-Mur2Ac(oyl-L-Ala-gamma-D-Glu-L-Lys-D-Ala-D-Ala)](n+1)-di-trans,octa-cis-undecaprenyl diphosphate + di-trans,octa-cis-undecaprenyl diphosphate + H(+). The protein operates within cell wall biogenesis; peptidoglycan biosynthesis. Peptidoglycan polymerase that catalyzes glycan chain elongation from lipid-linked precursors. This is Biosynthetic peptidoglycan transglycosylase from Caulobacter vibrioides (strain ATCC 19089 / CIP 103742 / CB 15) (Caulobacter crescentus).